The chain runs to 199 residues: 7-methyl-GTP pyrophosphatase (199 aa).

Aspartate 73 acts as the Proton acceptor in catalysis.

Belongs to the Maf family. YceF subfamily. The cofactor is a divalent metal cation.

The protein resides in the cytoplasm. It carries out the reaction N(7)-methyl-GTP + H2O = N(7)-methyl-GMP + diphosphate + H(+). In terms of biological role, nucleoside triphosphate pyrophosphatase that hydrolyzes 7-methyl-GTP (m(7)GTP). May have a dual role in cell division arrest and in preventing the incorporation of modified nucleotides into cellular nucleic acids. The polypeptide is 7-methyl-GTP pyrophosphatase (Bordetella pertussis (strain Tohama I / ATCC BAA-589 / NCTC 13251)).